The following is a 359-amino-acid chain: UDP-3-O-acylglucosamine N-acyltransferase (359 aa).

The active-site Proton acceptor is the His-256.

Belongs to the transferase hexapeptide repeat family. LpxD subfamily. Homotrimer.

It catalyses the reaction a UDP-3-O-[(3R)-3-hydroxyacyl]-alpha-D-glucosamine + a (3R)-hydroxyacyl-[ACP] = a UDP-2-N,3-O-bis[(3R)-3-hydroxyacyl]-alpha-D-glucosamine + holo-[ACP] + H(+). The protein operates within bacterial outer membrane biogenesis; LPS lipid A biosynthesis. Functionally, catalyzes the N-acylation of UDP-3-O-acylglucosamine using 3-hydroxyacyl-ACP as the acyl donor. Is involved in the biosynthesis of lipid A, a phosphorylated glycolipid that anchors the lipopolysaccharide to the outer membrane of the cell. The sequence is that of UDP-3-O-acylglucosamine N-acyltransferase from Rhodopseudomonas palustris (strain BisB5).